A 196-amino-acid chain; its full sequence is UPF0301 protein BT_1078 (196 aa).

This sequence belongs to the UPF0301 (AlgH) family.

The polypeptide is UPF0301 protein BT_1078 (Bacteroides thetaiotaomicron (strain ATCC 29148 / DSM 2079 / JCM 5827 / CCUG 10774 / NCTC 10582 / VPI-5482 / E50)).